Here is a 552-residue protein sequence, read N- to C-terminus: Arginine--tRNA ligase (552 aa).

The 'HIGH' region motif lies at 123–133 (ANPTGPLTIGR).

Belongs to the class-I aminoacyl-tRNA synthetase family. As to quaternary structure, monomer.

The protein localises to the cytoplasm. The enzyme catalyses tRNA(Arg) + L-arginine + ATP = L-arginyl-tRNA(Arg) + AMP + diphosphate. This chain is Arginine--tRNA ligase, found in Pelodictyon phaeoclathratiforme (strain DSM 5477 / BU-1).